Here is a 172-residue protein sequence, read N- to C-terminus: uncharacterized protein (172 aa).

This is an uncharacterized protein from Haemophilus influenzae (strain ATCC 51907 / DSM 11121 / KW20 / Rd).